A 239-amino-acid chain; its full sequence is MNIEQFTAGLEKKGISLSSFQLEQFETYYEWLVEWNEKMNLTSITEKKEVYLKHFYDSIAASFYVDFKKMNTLCDVGAGAGFPSLPIKICFPHLHVTIVDSLNKRIHFLNQLSDALKLENTAFYHDRAETFGRSKDHRESYDVVTARAVARLSVLSELCLPLVKKDGLFVALKAASADEEIETGKKAIKTLGGKIETVHSFQLPIEESERNIIVIKKQSQTPKKFPRKPGTPNKSPIEG.

Residues Gly-77, Phe-82, 128-129, and Arg-147 each bind S-adenosyl-L-methionine; that span reads AE. Residues 216–239 form a disordered region; the sequence is KKQSQTPKKFPRKPGTPNKSPIEG.

It belongs to the methyltransferase superfamily. RNA methyltransferase RsmG family.

It is found in the cytoplasm. Specifically methylates the N7 position of guanine in position 535 of 16S rRNA. The chain is Ribosomal RNA small subunit methyltransferase G from Bacillus licheniformis (strain ATCC 14580 / DSM 13 / JCM 2505 / CCUG 7422 / NBRC 12200 / NCIMB 9375 / NCTC 10341 / NRRL NRS-1264 / Gibson 46).